Reading from the N-terminus, the 124-residue chain is MNMKMLLTRIHEMNALISSELNGRVDFFKNHRMFILSLVKILLVCTSRESLSVMYFRFDSFFDFLSGGASLPVLDSLEYALSDAAAIDGILKLLRRAGLLAQYTYLATENCRGLLRKGLVKRDI.

This is an uncharacterized protein from Saccharomyces cerevisiae (strain ATCC 204508 / S288c) (Baker's yeast).